Reading from the N-terminus, the 247-residue chain is Elongation factor Ts (247 aa).

Positions Thr-82–Val-85 are involved in Mg(2+) ion dislocation from EF-Tu.

This sequence belongs to the EF-Ts family.

The protein localises to the cytoplasm. Its function is as follows. Associates with the EF-Tu.GDP complex and induces the exchange of GDP to GTP. It remains bound to the aminoacyl-tRNA.EF-Tu.GTP complex up to the GTP hydrolysis stage on the ribosome. The sequence is that of Elongation factor Ts (tsf) from Arthrospira platensis (Spirulina platensis).